Here is a 598-residue protein sequence, read N- to C-terminus: Probable translation initiation factor IF-2 (598 aa).

The tr-type G domain occupies 3–225 (LRCPIVSVLG…GLAQKFLEQK (223 aa)). Residues 12 to 19 (GHVDHGKT) form a G1 region. Residue 12-19 (GHVDHGKT) coordinates GTP. Positions 37–41 (GITQH) are G2. Residues 76–79 (DTPG) form a G3 region. Residues 76–80 (DTPGH) and 130–133 (NKLD) contribute to the GTP site. Positions 130-133 (NKLD) are G4. The G5 stretch occupies residues 200-202 (SAM).

Belongs to the TRAFAC class translation factor GTPase superfamily. Classic translation factor GTPase family. IF-2 subfamily.

Functionally, function in general translation initiation by promoting the binding of the formylmethionine-tRNA to ribosomes. Seems to function along with eIF-2. The chain is Probable translation initiation factor IF-2 from Methanococcus maripaludis (strain C6 / ATCC BAA-1332).